The chain runs to 355 residues: MEWIQSLPKIELHAHLNGSIRDSTLLELARVLGEKGVIVFADVEHVIQKNDRSLVEVFKLFDLIHKLTTDHKTVTRITREVVEDFALENVVYLELRTTPKRSDSIGMSKRSYMEAVIQGLRSVSEVDIDFVTASDSQKLHNAGDGIGRKKIYVRLLLSIDRRETTESAMETVKLALEMRDVGVVGIDLSGNPLVGEWSTFLPALQYAKDNDLHITLHCGEVPNPKEIQAMLDFKPHRIGHACFFKDEDWTKLKSFRIPVEICLTSNIVTKSISSIDIHHFADLYNAKHPLILCTDDFGVFSTSLSNEYALAVRSLGLSKSETFALARAAIDATFAEDEVKQQLRFIFDSASPEHV.

Residues His13 and His15 each contribute to the Zn(2+) site. Residues His15, Asn17, His65, 97 to 100 (TTPK), Asp160, and Gly190 each bind N(6)-methyl-AMP. Zn(2+) is bound at residue His217. N(6)-methyl-AMP is bound by residues Glu220, Asp295, and Asp296. Glu220 (proton donor) is an active-site residue. Asp295 provides a ligand contact to Zn(2+).

Belongs to the metallo-dependent hydrolases superfamily. Adenosine and AMP deaminases family. As to quaternary structure, monomer. Requires Zn(2+) as cofactor.

The protein resides in the cytoplasm. It is found in the cytosol. It carries out the reaction N(6)-methyl-AMP + H2O + H(+) = IMP + methylamine. Its function is as follows. Catalyzes the hydrolysis of the free cytosolic methylated adenosine nucleotide N(6)-methyl-AMP (N6-mAMP) to produce inositol monophosphate (IMP) and methylamine. Is required for the catabolism of cytosolic N6-mAMP, which is derived from the degradation of mRNA containing N6-methylated adenine (m6A). Does not possess deaminase activity toward adenosine, AMP, N6-methyladenosine, or N6-mATP in vitro. In Arabidopsis thaliana (Mouse-ear cress), this protein is N6-mAMP deaminase.